The sequence spans 308 residues: Probable peptidyl-prolyl cis-trans isomerase B (308 aa).

The disordered stretch occupies residues 74 to 123 (DHQSTTSATPTDSASTSPPQAATAPPLPPFKPSANLGANCQYPPSPDKAV). Residues 77–97 (STTSATPTDSASTSPPQAATA) are compositionally biased toward low complexity. A PPIase cyclophilin-type domain is found at 139–307 (AQVSVSMVTN…TEVTITSVLL (169 aa)).

It belongs to the cyclophilin-type PPIase family.

It catalyses the reaction [protein]-peptidylproline (omega=180) = [protein]-peptidylproline (omega=0). Its function is as follows. PPIases accelerate the folding of proteins. It catalyzes the cis-trans isomerization of proline imidic peptide bonds in oligopeptides. This chain is Probable peptidyl-prolyl cis-trans isomerase B (ppiB), found in Mycobacterium tuberculosis (strain CDC 1551 / Oshkosh).